The chain runs to 224 residues: N-(5'-phosphoribosyl)anthranilate isomerase (224 aa).

Belongs to the TrpF family.

It carries out the reaction N-(5-phospho-beta-D-ribosyl)anthranilate = 1-(2-carboxyphenylamino)-1-deoxy-D-ribulose 5-phosphate. It functions in the pathway amino-acid biosynthesis; L-tryptophan biosynthesis; L-tryptophan from chorismate: step 3/5. This chain is N-(5'-phosphoribosyl)anthranilate isomerase (TRP1), found in Saccharomyces cerevisiae (strain ATCC 204508 / S288c) (Baker's yeast).